Here is a 273-residue protein sequence, read N- to C-terminus: L-cysteine S-thiosulfotransferase subunit SoxA (273 aa).

An N-terminal signal peptide occupies residues 1–24 (MKKTVTAVALLCALSSTAIAPTFA). Residues C74 and C110 are joined by a disulfide bond. Residues 162 to 273 (EMYELGKRMF…GVMLTPGIKR (112 aa)) form the Cytochrome c domain. Residues C182 and H186 each coordinate heme. R230 contributes to the substrate binding site. C234 lines the heme pocket. Catalysis depends on C234, which acts as the Cysteine persulfide intermediate.

It belongs to the SoxA family. As to quaternary structure, heterodimer of SoxA and SoxX. The cofactor is heme. Cysteine persulfide at Cys-234.

It localises to the periplasm. It catalyses the reaction L-cysteinyl-[SoxY protein] + thiosulfate + 2 Fe(III)-[cytochrome c] = S-sulfosulfanyl-L-cysteinyl-[SoxY protein] + 2 Fe(II)-[cytochrome c] + 2 H(+). It carries out the reaction S-sulfanyl-L-cysteinyl-[SoxY protein] + thiosulfate + 2 Fe(III)-[cytochrome c] = S-(2-sulfodisulfanyl)-L-cysteinyl-[SoxY protein] + 2 Fe(II)-[cytochrome c] + 2 H(+). Its function is as follows. C-type monoheme cytochrome, which is part of the SoxAX cytochrome complex involved in sulfur oxidation. The SoxAX complex catalyzes the formation of a heterodisulfide bond between the conserved cysteine residue on a sulfur carrier SoxYZ complex subunit SoxY and thiosulfate or other inorganic sulfur substrates. This leads to the liberation of two electrons, which may be transferred from the SoxAX complex to another cytochrome c that then channels them into the respiratory electron transport chain. Some electrons may be used for reductive CO(2) fixation. In Hydrogenophilus thermoluteolus (Pseudomonas hydrogenothermophila), this protein is L-cysteine S-thiosulfotransferase subunit SoxA.